Consider the following 216-residue polypeptide: Thioredoxin-like 2, chloroplastic (216 aa).

A chloroplast-targeting transit peptide spans 1 to 58; sequence MAEALLPLPRRLVVTASTPACSSASSSTSPSPHCLLSRANPRPPRLAAPSPPRHRRLK. Positions 19-40 are enriched in low complexity; that stretch reads PACSSASSSTSPSPHCLLSRAN. Residues 19–70 form a disordered region; the sequence is PACSSASSSTSPSPHCLLSRANPRPPRLAAPSPPRHRRLKAHAAVSDKSEQP. The span at 41–51 shows a compositional bias: pro residues; the sequence is PRPPRLAAPSP. The region spanning 61–188 is the Thioredoxin domain; that stretch reads AAVSDKSEQP…LKDAIAVHNT (128 aa). Residues C111 and C114 each act as nucleophile in the active site. Residues C111 and C114 are joined by a disulfide bond.

It belongs to the thioredoxin family.

It localises to the plastid. The protein resides in the chloroplast. Functionally, probable thiol-disulfide oxidoreductase that may participate in various redox reactions. The chain is Thioredoxin-like 2, chloroplastic from Oryza sativa subsp. japonica (Rice).